A 366-amino-acid chain; its full sequence is Phospho-N-acetylmuramoyl-pentapeptide-transferase (366 aa).

The next 10 membrane-spanning stretches (helical) occupy residues 25-45 (AGAAMFTSALIVFLFGPAIIN), 70-90 (GTPTMGGLMILAGILGGSLLW), 93-113 (LSNVYVVAVLMVTLGFGAIGF), 134-154 (LGIEFLIAAIAVFFMMKMALA), 174-194 (FVINLGYFFVLFGAFVIVGAG), 205-225 (GLAIVPVMIAAATFGVIAYLA), 245-265 (LAVIVGAVIGAGLGFLWFNAP), 268-288 (AIFMGDTGSLALGGLIGSIAV), 297-317 (VIVGGLFVMETLSVIIQVFWF), and 343-363 (QVVIRFWIISVGLALLGLATL).

Belongs to the glycosyltransferase 4 family. MraY subfamily. Mg(2+) is required as a cofactor.

The protein localises to the cell inner membrane. The catalysed reaction is UDP-N-acetyl-alpha-D-muramoyl-L-alanyl-gamma-D-glutamyl-meso-2,6-diaminopimeloyl-D-alanyl-D-alanine + di-trans,octa-cis-undecaprenyl phosphate = di-trans,octa-cis-undecaprenyl diphospho-N-acetyl-alpha-D-muramoyl-L-alanyl-D-glutamyl-meso-2,6-diaminopimeloyl-D-alanyl-D-alanine + UMP. Its pathway is cell wall biogenesis; peptidoglycan biosynthesis. Its function is as follows. Catalyzes the initial step of the lipid cycle reactions in the biosynthesis of the cell wall peptidoglycan: transfers peptidoglycan precursor phospho-MurNAc-pentapeptide from UDP-MurNAc-pentapeptide onto the lipid carrier undecaprenyl phosphate, yielding undecaprenyl-pyrophosphoryl-MurNAc-pentapeptide, known as lipid I. This chain is Phospho-N-acetylmuramoyl-pentapeptide-transferase, found in Agrobacterium fabrum (strain C58 / ATCC 33970) (Agrobacterium tumefaciens (strain C58)).